Reading from the N-terminus, the 495-residue chain is Cytochrome P450 monooxygenase cnsC (495 aa).

A heme-binding site is contributed by Cys-434.

The protein belongs to the cytochrome P450 family. Heme is required as a cofactor.

The protein operates within alkaloid biosynthesis. Its function is as follows. Cytochrome P450 monooxygenase; part of the gene cluster that mediates the biosynthesis of communesins, a prominent class of indole alkaloids with great potential as pharmaceuticals. Communesins are biosynthesized by the coupling of tryptamine and aurantioclavine, two building blocks derived from L-tryptophan. The L-tryptophan decarboxylase cnsB converts L-tryptophan to tryptamine, whereas the tryptophan dimethylallyltransferase cnsF converts L-tryptophan to 4-dimethylallyl tryptophan which is further transformed to aurantioclavine by the aurantioclavine synthase cnsA, probably aided by the catalase cnsD. The cytochrome P450 monooxygenase cnsC catalyzes the heterodimeric coupling between the two different indole moieties, tryptamine and aurantioclavine, to construct vicinal quaternary stereocenters and yield the heptacyclic communesin scaffold. The O-methyltransferase cnsE then methylates the communesin scaffold to produce communesin K, the simplest characterized communesin that contains the heptacyclic core. The dioxygenase cnsJ converts communesin K into communesin I. Acylation to introduce the hexadienyl group at position N16 of communesin I by the acyltransferase cnsK leads to the production of communesin B. The hexadienyl group is produced by the highly reducing polyketide synthase cnsI, before being hydrolytically removed from cnsI by the serine hydrolase cnsH, converted into hexadienyl-CoA by the CoA ligase cnsG, and then transferred to communesin I by cnsK. Surprisingly, cnsK may also be a promiscuous acyltransferase that can tolerate a range of acyl groups, including acetyl-, propionyl-, and butyryl-CoA, which lead to communesins A, G and H respectively. The roles of the alpha-ketoglutarate-dependent dioxygenases cnsM and cnsP have still to be determined. The polypeptide is Cytochrome P450 monooxygenase cnsC (Penicillium expansum (Blue mold rot fungus)).